An 875-amino-acid polypeptide reads, in one-letter code: Alanine--tRNA ligase (875 aa).

Positions 564, 568, 666, and 670 each coordinate Zn(2+).

Belongs to the class-II aminoacyl-tRNA synthetase family. Homotetramer. Zn(2+) serves as cofactor.

It localises to the cytoplasm. It carries out the reaction tRNA(Ala) + L-alanine + ATP = L-alanyl-tRNA(Ala) + AMP + diphosphate. Catalyzes the attachment of alanine to tRNA(Ala) in a two-step reaction: alanine is first activated by ATP to form Ala-AMP and then transferred to the acceptor end of tRNA(Ala). Also edits incorrectly charged Ser-tRNA(Ala) and Gly-tRNA(Ala) via its editing domain. The chain is Alanine--tRNA ligase from Citrobacter koseri (strain ATCC BAA-895 / CDC 4225-83 / SGSC4696).